The sequence spans 172 residues: Large ribosomal subunit protein eL20 (172 aa).

This sequence belongs to the eukaryotic ribosomal protein eL20 family. Component of the large ribosomal subunit. Mature ribosomes consist of a small (40S) and a large (60S) subunit. The 40S subunit contains about 32 different proteins and 1 molecule of RNA (18S). The 60S subunit contains 45 different proteins and 3 molecules of RNA (25S, 5.8S and 5S).

Its subcellular location is the cytoplasm. Functionally, component of the ribosome, a large ribonucleoprotein complex responsible for the synthesis of proteins in the cell. The small ribosomal subunit (SSU) binds messenger RNAs (mRNAs) and translates the encoded message by selecting cognate aminoacyl-transfer RNA (tRNA) molecules. The large subunit (LSU) contains the ribosomal catalytic site termed the peptidyl transferase center (PTC), which catalyzes the formation of peptide bonds, thereby polymerizing the amino acids delivered by tRNAs into a polypeptide chain. The nascent polypeptides leave the ribosome through a tunnel in the LSU and interact with protein factors that function in enzymatic processing, targeting, and the membrane insertion of nascent chains at the exit of the ribosomal tunnel. The sequence is that of Large ribosomal subunit protein eL20 from Candida albicans (strain SC5314 / ATCC MYA-2876) (Yeast).